The chain runs to 159 residues: Ribosomal RNA large subunit methyltransferase H (159 aa).

S-adenosyl-L-methionine is bound by residues Leu76, Gly108, and 127–132 (FSKMTF).

It belongs to the RNA methyltransferase RlmH family. As to quaternary structure, homodimer.

Its subcellular location is the cytoplasm. The catalysed reaction is pseudouridine(1915) in 23S rRNA + S-adenosyl-L-methionine = N(3)-methylpseudouridine(1915) in 23S rRNA + S-adenosyl-L-homocysteine + H(+). In terms of biological role, specifically methylates the pseudouridine at position 1915 (m3Psi1915) in 23S rRNA. The protein is Ribosomal RNA large subunit methyltransferase H of Clostridium botulinum (strain Okra / Type B1).